The chain runs to 335 residues: Anthranilate phosphoribosyltransferase (335 aa).

5-phospho-alpha-D-ribose 1-diphosphate contacts are provided by residues glycine 79, 82–83 (GD), serine 87, 89–92 (NIST), 107–115 (KHGNRSITS), and serine 119. Glycine 79 provides a ligand contact to anthranilate. Residue serine 91 participates in Mg(2+) binding. Asparagine 110 is a binding site for anthranilate. Arginine 165 is an anthranilate binding site. Mg(2+)-binding residues include aspartate 224 and glutamate 225.

It belongs to the anthranilate phosphoribosyltransferase family. Homodimer. Mg(2+) is required as a cofactor.

The catalysed reaction is N-(5-phospho-beta-D-ribosyl)anthranilate + diphosphate = 5-phospho-alpha-D-ribose 1-diphosphate + anthranilate. The protein operates within amino-acid biosynthesis; L-tryptophan biosynthesis; L-tryptophan from chorismate: step 2/5. Catalyzes the transfer of the phosphoribosyl group of 5-phosphorylribose-1-pyrophosphate (PRPP) to anthranilate to yield N-(5'-phosphoribosyl)-anthranilate (PRA). This chain is Anthranilate phosphoribosyltransferase, found in Lactococcus lactis subsp. cremoris (strain MG1363).